The chain runs to 256 residues: Small ribosomal subunit protein uS2 (256 aa).

Belongs to the universal ribosomal protein uS2 family.

This chain is Small ribosomal subunit protein uS2, found in Methylococcus capsulatus (strain ATCC 33009 / NCIMB 11132 / Bath).